We begin with the raw amino-acid sequence, 149 residues long: Large ribosomal subunit protein uL22c (149 aa).

This sequence belongs to the universal ribosomal protein uL22 family. Part of the 50S ribosomal subunit.

The protein localises to the plastid. It is found in the chloroplast. In terms of biological role, this protein binds specifically to 23S rRNA. The globular domain of the protein is located near the polypeptide exit tunnel on the outside of the subunit, while an extended beta-hairpin is found that lines the wall of the exit tunnel in the center of the 70S ribosome. The polypeptide is Large ribosomal subunit protein uL22c (rpl22) (Oryza nivara (Indian wild rice)).